A 197-amino-acid chain; its full sequence is Large ribosomal subunit protein eL15 (197 aa).

Residues 175–197 are disordered; sequence LRTGRKGSSKSRPSIRANGRLRR.

This sequence belongs to the eukaryotic ribosomal protein eL15 family.

The chain is Large ribosomal subunit protein eL15 (rpl15e) from Thermoplasma volcanium (strain ATCC 51530 / DSM 4299 / JCM 9571 / NBRC 15438 / GSS1).